A 104-amino-acid polypeptide reads, in one-letter code: Large ribosomal subunit protein uL24 (104 aa).

This sequence belongs to the universal ribosomal protein uL24 family. Part of the 50S ribosomal subunit.

Its function is as follows. One of two assembly initiator proteins, it binds directly to the 5'-end of the 23S rRNA, where it nucleates assembly of the 50S subunit. In terms of biological role, one of the proteins that surrounds the polypeptide exit tunnel on the outside of the subunit. This chain is Large ribosomal subunit protein uL24, found in Clostridium perfringens (strain SM101 / Type A).